The chain runs to 553 residues: MFCIQCEQTIQTPTTKGCSFAQGMCGKTAEVSDLQDILVYALQGVSFWAEQGRKVNVIFDEIDQWAPKAFFATLTNVNFDPERVIEFALQAQAYKQQLEETVRAAATVTNTELDELSPAAKFELPTEAEQIIALAPQAAVNRGHETQHEDIIGLRLLCLYGLKGAAAYMEHARVLGQTDKDVFAEYHQIMAWLGTDPTDLGELLDCSMKIGLMNYRIMEMLDTGETDTFGHPEPSQVNVKTIEGKCILVSGHDLHDLEKILQQTEGKGINVYTNGEMLPAHSYPELKKYPHLVGNYGSAWQNQQKEFANFPGAIVMTSNCLLNPNVGQYADRLFTRSIVGWPGVAHIEGDDFTTVIDCALAQEGFKHNEIEQMITVGFGRNALMAAAPAVVEQVKEGNISHFFLVGGCDGDKSERSYYTDFTAQAPEDSVILTLACGKYRFNKNQFGDINGIPRLLDVGQCNDAYSAIQLALALAKEFDCDINELPLTLVLSWFEQKAIVILLTLFALGVKGIYTGPTAPAFLTDNLLAIIQEKFDMRSIGNVEDDLKAILAA.

[2Fe-2S] cluster is bound by residues C3, C6, C18, and C25. Residues H252, E276, C320, C408, C436, C461, E495, and K497 each contribute to the hybrid [4Fe-2O-2S] cluster site. C408 is subject to Cysteine persulfide.

This sequence belongs to the HCP family. The cofactor is [2Fe-2S] cluster. It depends on hybrid [4Fe-2O-2S] cluster as a cofactor.

The protein localises to the cytoplasm. The catalysed reaction is A + NH4(+) + H2O = hydroxylamine + AH2 + H(+). In terms of biological role, catalyzes the reduction of hydroxylamine to form NH(3) and H(2)O. This chain is Hydroxylamine reductase, found in Aliivibrio fischeri (strain MJ11) (Vibrio fischeri).